The chain runs to 806 residues: Sperm head and tail associated protein (806 aa).

4 disordered regions span residues 1–36 (MNSSPPFLLKISAPSTSPQADCPNNYSFPPESPSSC), 257–329 (TPAS…MSGS), 428–496 (LNNQ…CPQP), and 707–806 (SQIN…SKKK). Polar residues predominate over residues 13–27 (APSTSPQADCPNNYS). The span at 277 to 290 (PPLSSASSPPSGNP) shows a compositional bias: low complexity. Residues 320-329 (LSSQAGMSGS) show a composition bias toward polar residues. The segment at 521–806 (KEPPPETAVL…QIKSPHSKKK (286 aa)) is interaction with CRISP2. 2 stretches are compositionally biased toward low complexity: residues 710–723 (NHQNKSQSPNKNSS) and 733–754 (RRGAFQSRSRSRSSSPLQSSTQ). Residues 773–788 (QSQSPADGKIESQSKS) show a composition bias toward polar residues.

In terms of assembly, interacts with CRISP2. As to expression, isoforms 3 and 4 are expressed in testis (at protein level).

The protein resides in the cytoplasm. Plays a role during spermatogenesis. The protein is Sperm head and tail associated protein (Nsun4) of Mus musculus (Mouse).